Reading from the N-terminus, the 307-residue chain is Streptomycin 6-kinase (307 aa).

133–145 provides a ligand contact to streptomycin; it reads LAGLLARLVSVPA. The active-site Proton acceptor is Asp201.

Belongs to the aminoglycoside phosphotransferase family.

The enzyme catalyses streptomycin + ATP = streptomycin 6-phosphate + ADP + H(+). Functionally, the aminoglycoside phosphotransferases achieve inactivation of their antibiotic substrates by phosphorylation. The chain is Streptomycin 6-kinase (sph) from Streptomyces glaucescens.